The following is a 493-amino-acid chain: Ribose import ATP-binding protein RbsA (493 aa).

2 consecutive ABC transporter domains span residues Ile3–Glu239 and Gly252–Arg493. Gly35 to Ser42 contacts ATP.

Belongs to the ABC transporter superfamily. Ribose importer (TC 3.A.1.2.1) family. As to quaternary structure, the complex is composed of an ATP-binding protein (RbsA), two transmembrane proteins (RbsC) and a solute-binding protein (RbsB).

The protein localises to the cell membrane. The catalysed reaction is D-ribose(out) + ATP + H2O = D-ribose(in) + ADP + phosphate + H(+). Part of the ABC transporter complex RbsABC involved in ribose import. Responsible for energy coupling to the transport system. This chain is Ribose import ATP-binding protein RbsA, found in Bacillus licheniformis (strain ATCC 14580 / DSM 13 / JCM 2505 / CCUG 7422 / NBRC 12200 / NCIMB 9375 / NCTC 10341 / NRRL NRS-1264 / Gibson 46).